The following is a 316-amino-acid chain: 4-hydroxy-3-methylbut-2-enyl diphosphate reductase (316 aa).

[4Fe-4S] cluster is bound at residue C12. Residues H41 and H74 each coordinate (2E)-4-hydroxy-3-methylbut-2-enyl diphosphate. H41 and H74 together coordinate dimethylallyl diphosphate. Isopentenyl diphosphate contacts are provided by H41 and H74. A [4Fe-4S] cluster-binding site is contributed by C96. Residue H124 participates in (2E)-4-hydroxy-3-methylbut-2-enyl diphosphate binding. Residue H124 coordinates dimethylallyl diphosphate. An isopentenyl diphosphate-binding site is contributed by H124. The active-site Proton donor is the E126. T167 contributes to the (2E)-4-hydroxy-3-methylbut-2-enyl diphosphate binding site. C197 contributes to the [4Fe-4S] cluster binding site. Residues S225, S226, N227, and S269 each contribute to the (2E)-4-hydroxy-3-methylbut-2-enyl diphosphate site. Residues S225, S226, N227, and S269 each coordinate dimethylallyl diphosphate. S225, S226, N227, and S269 together coordinate isopentenyl diphosphate.

Belongs to the IspH family. Homodimer. The cofactor is [4Fe-4S] cluster.

It carries out the reaction isopentenyl diphosphate + 2 oxidized [2Fe-2S]-[ferredoxin] + H2O = (2E)-4-hydroxy-3-methylbut-2-enyl diphosphate + 2 reduced [2Fe-2S]-[ferredoxin] + 2 H(+). The enzyme catalyses dimethylallyl diphosphate + 2 oxidized [2Fe-2S]-[ferredoxin] + H2O = (2E)-4-hydroxy-3-methylbut-2-enyl diphosphate + 2 reduced [2Fe-2S]-[ferredoxin] + 2 H(+). It functions in the pathway isoprenoid biosynthesis; dimethylallyl diphosphate biosynthesis; dimethylallyl diphosphate from (2E)-4-hydroxy-3-methylbutenyl diphosphate: step 1/1. The protein operates within isoprenoid biosynthesis; isopentenyl diphosphate biosynthesis via DXP pathway; isopentenyl diphosphate from 1-deoxy-D-xylulose 5-phosphate: step 6/6. Functionally, catalyzes the conversion of 1-hydroxy-2-methyl-2-(E)-butenyl 4-diphosphate (HMBPP) into a mixture of isopentenyl diphosphate (IPP) and dimethylallyl diphosphate (DMAPP). Acts in the terminal step of the DOXP/MEP pathway for isoprenoid precursor biosynthesis. The sequence is that of 4-hydroxy-3-methylbut-2-enyl diphosphate reductase from Sodalis glossinidius (strain morsitans).